Reading from the N-terminus, the 878-residue chain is DNA mismatch repair protein MutS (878 aa).

Gly-618–Ser-625 provides a ligand contact to ATP. Basic and acidic residues-rich tracts occupy residues Leu-800–Pro-811 and Gly-863–Arg-878. Disordered stretches follow at residues Leu-800–Leu-842 and Ser-859–Arg-878.

Belongs to the DNA mismatch repair MutS family.

This protein is involved in the repair of mismatches in DNA. It is possible that it carries out the mismatch recognition step. This protein has a weak ATPase activity. This chain is DNA mismatch repair protein MutS, found in Alkalilimnicola ehrlichii (strain ATCC BAA-1101 / DSM 17681 / MLHE-1).